The chain runs to 201 residues: Pyridoxine/pyridoxamine 5'-phosphate oxidase (201 aa).

FMN contacts are provided by residues arginine 49 to lysine 54, tyrosine 64 to threonine 65, lysine 71, and glutamine 93. Lysine 54 provides a ligand contact to substrate. Residues tyrosine 111, arginine 115, and serine 119 each contribute to the substrate site. Residues glutamine 128–serine 129 and tryptophan 172 contribute to the FMN site. Substrate is bound at residue arginine 178–histidine 180. Residue arginine 182 coordinates FMN.

It belongs to the pyridoxamine 5'-phosphate oxidase family. In terms of assembly, homodimer. The cofactor is FMN.

The catalysed reaction is pyridoxamine 5'-phosphate + O2 + H2O = pyridoxal 5'-phosphate + H2O2 + NH4(+). It carries out the reaction pyridoxine 5'-phosphate + O2 = pyridoxal 5'-phosphate + H2O2. The protein operates within cofactor metabolism; pyridoxal 5'-phosphate salvage; pyridoxal 5'-phosphate from pyridoxamine 5'-phosphate: step 1/1. It participates in cofactor metabolism; pyridoxal 5'-phosphate salvage; pyridoxal 5'-phosphate from pyridoxine 5'-phosphate: step 1/1. Its function is as follows. Catalyzes the oxidation of either pyridoxine 5'-phosphate (PNP) or pyridoxamine 5'-phosphate (PMP) into pyridoxal 5'-phosphate (PLP). The protein is Pyridoxine/pyridoxamine 5'-phosphate oxidase of Ruegeria sp. (strain TM1040) (Silicibacter sp.).